A 416-amino-acid polypeptide reads, in one-letter code: Gamma-glutamyl phosphate reductase (416 aa).

This sequence belongs to the gamma-glutamyl phosphate reductase family.

The protein localises to the cytoplasm. It catalyses the reaction L-glutamate 5-semialdehyde + phosphate + NADP(+) = L-glutamyl 5-phosphate + NADPH + H(+). It functions in the pathway amino-acid biosynthesis; L-proline biosynthesis; L-glutamate 5-semialdehyde from L-glutamate: step 2/2. Functionally, catalyzes the NADPH-dependent reduction of L-glutamate 5-phosphate into L-glutamate 5-semialdehyde and phosphate. The product spontaneously undergoes cyclization to form 1-pyrroline-5-carboxylate. The polypeptide is Gamma-glutamyl phosphate reductase (Streptococcus thermophilus (strain ATCC BAA-491 / LMD-9)).